The following is a 173-amino-acid chain: Bursicon (173 aa).

The N-terminal stretch at 1-32 (MLRHLLRHENNKVFVLILLYCVLVSILKLCTA) is a signal peptide. 5 disulfide bridges follow: Cys52-Cys101, Cys66-Cys115, Cys76-Cys136, Cys80-Cys138, and Cys98-Cys141. The CTCK domain maps to 52 to 142 (CQVTPVIHVL…PLECMCRPCT (91 aa)).

Heterodimer of Burs and Pburs. In terms of tissue distribution, expressed in one to two pairs of neurons in each of the thoracic and abdominal neuromeres of the larval CNS. Coexpressed with CCAP in most CCAP-specific neurons. Coexpressed with Pburs in four bilateral neurons in thoracic and abdominal neuromeres of the ventral nervous system.

The protein resides in the secreted. In terms of biological role, final heterodimeric neurohormone released at the end of the molting cycle, involved in the sclerotization (tanning) of the insect cuticle, melanization and wing spreading. Heterodimer specifically activates the G protein-coupled receptor rk. The chain is Bursicon from Drosophila melanogaster (Fruit fly).